Reading from the N-terminus, the 439-residue chain is uncharacterized protein (439 aa).

Residues 268 to 284 are compositionally biased toward low complexity; sequence QQQQQQQPQHNNNNTQV. The tract at residues 268-439 is disordered; sequence QQQQQQQPQH…RTRFTTTNLH (172 aa). Residues 285-328 are compositionally biased toward pro residues; the sequence is QPPPPSQQLPPPPKPQPQLPKPQPQKPQPQLPKPPQQPKPPQEP. Low complexity predominate over residues 350–439; sequence QEQQQQPPQE…RTRFTTTNLH (90 aa).

This is an uncharacterized protein from Dictyostelium discoideum (Social amoeba).